A 236-amino-acid polypeptide reads, in one-letter code: Transcriptional activator protein SolR (236 aa).

One can recognise an HTH luxR-type domain in the interval 169–234 (VPESSAALTA…QAVVKAIAIG (66 aa)). Residues 193 to 212 (AYEIGQILRISERTVNFHVN) constitute a DNA-binding region (H-T-H motif).

The protein belongs to the autoinducer-regulated transcriptional regulatory protein family.

The polypeptide is Transcriptional activator protein SolR (solR) (Ralstonia nicotianae (strain ATCC BAA-1114 / GMI1000) (Ralstonia solanacearum)).